Consider the following 155-residue polypeptide: Endoribonuclease YbeY (155 aa).

Zn(2+)-binding residues include His-115, His-119, and His-125.

Belongs to the endoribonuclease YbeY family. It depends on Zn(2+) as a cofactor.

Its subcellular location is the cytoplasm. In terms of biological role, single strand-specific metallo-endoribonuclease involved in late-stage 70S ribosome quality control and in maturation of the 3' terminus of the 16S rRNA. This Polynucleobacter asymbioticus (strain DSM 18221 / CIP 109841 / QLW-P1DMWA-1) (Polynucleobacter necessarius subsp. asymbioticus) protein is Endoribonuclease YbeY.